Here is a 206-residue protein sequence, read N- to C-terminus: Small ribosomal subunit protein uS4 (206 aa).

Residues 96-156 (NRLDNVTYRI…KNSKLQSRIK (61 aa)) form the S4 RNA-binding domain.

It belongs to the universal ribosomal protein uS4 family. Part of the 30S ribosomal subunit. Contacts protein S5. The interaction surface between S4 and S5 is involved in control of translational fidelity.

In terms of biological role, one of the primary rRNA binding proteins, it binds directly to 16S rRNA where it nucleates assembly of the body of the 30S subunit. With S5 and S12 plays an important role in translational accuracy. The polypeptide is Small ribosomal subunit protein uS4 (Buchnera aphidicola subsp. Baizongia pistaciae (strain Bp)).